The primary structure comprises 71 residues: DNA-directed RNA polymerase subunit omega (71 aa).

It belongs to the RNA polymerase subunit omega family. As to quaternary structure, the RNAP catalytic core consists of 2 alpha, 1 beta, 1 beta' and 1 omega subunit. When a sigma factor is associated with the core the holoenzyme is formed, which can initiate transcription.

The catalysed reaction is RNA(n) + a ribonucleoside 5'-triphosphate = RNA(n+1) + diphosphate. Its function is as follows. Promotes RNA polymerase assembly. Latches the N- and C-terminal regions of the beta' subunit thereby facilitating its interaction with the beta and alpha subunits. The chain is DNA-directed RNA polymerase subunit omega from Alkaliphilus oremlandii (strain OhILAs) (Clostridium oremlandii (strain OhILAs)).